A 272-amino-acid polypeptide reads, in one-letter code: Oligodendrocyte transcription factor 3 (272 aa).

The segment covering 1–14 (MNSDSSSVSSRASS) has biased composition (low complexity). The disordered stretch occupies residues 1 to 71 (MNSDSSSVSS…KAAGESSKYK (71 aa)). Over residues 24-33 (DHHHRHHHHQ) the composition is skewed to basic residues. Residues 36–46 (RLNSVSSTQGD) show a composition bias toward polar residues. Positions 68–89 (SKYKIKKQLSEQDLQQLRLKIN) form a coiled coil. The bHLH domain occupies 83–137 (QLRLKINGRERKRMHDLNLAMDGLREVMPYAHGPSVRKLSKIATLLLARNYILML).

Its subcellular location is the nucleus. Its function is as follows. May determine the distinct specification program of class A neurons in the dorsal part of the spinal cord and suppress specification of class B neurons. This chain is Oligodendrocyte transcription factor 3 (OLIG3), found in Homo sapiens (Human).